The following is a 285-amino-acid chain: 2-hydroxy-6-oxononadienedioate/2-hydroxy-6-oxononatrienedioate hydrolase 1 (285 aa).

H265 functions as the Proton acceptor in the catalytic mechanism.

This sequence belongs to the AB hydrolase superfamily. MhpC family. As to quaternary structure, homodimer.

The catalysed reaction is (2Z,4E)-2-hydroxy-6-oxonona-2,4-dienedioate + H2O = (2Z)-2-hydroxypenta-2,4-dienoate + succinate + H(+). It carries out the reaction (2Z,4E,7E)-2-hydroxy-6-oxonona-2,4,7-trienedioate + H2O = (2Z)-2-hydroxypenta-2,4-dienoate + fumarate + H(+). Its pathway is aromatic compound metabolism; 3-phenylpropanoate degradation. Its function is as follows. Catalyzes the cleavage of the C5-C6 bond of 2-hydroxy-6-oxononadienedioate and 2-hydroxy-6-oxononatrienedioate, a dienol ring fission product of the bacterial meta-cleavage pathway for degradation of phenylpropionic acid. The sequence is that of 2-hydroxy-6-oxononadienedioate/2-hydroxy-6-oxononatrienedioate hydrolase 1 from Pseudomonas putida (Arthrobacter siderocapsulatus).